The primary structure comprises 257 residues: UPF0246 protein A1S_2267 (257 aa).

The protein belongs to the UPF0246 family.

The protein is UPF0246 protein A1S_2267 of Acinetobacter baumannii (strain ATCC 17978 / DSM 105126 / CIP 53.77 / LMG 1025 / NCDC KC755 / 5377).